The sequence spans 273 residues: 4-hydroxy-tetrahydrodipicolinate reductase (273 aa).

NAD(+)-binding positions include glycine 12 to methionine 17 and glutamate 38. Arginine 39 contributes to the NADP(+) binding site. Residues glycine 102–threonine 104 and alanine 126–phenylalanine 129 each bind NAD(+). The active-site Proton donor/acceptor is the histidine 159. Histidine 160 is a binding site for (S)-2,3,4,5-tetrahydrodipicolinate. Lysine 163 (proton donor) is an active-site residue. (S)-2,3,4,5-tetrahydrodipicolinate is bound at residue glycine 169 to threonine 170.

Belongs to the DapB family. Homotetramer.

Its subcellular location is the cytoplasm. The catalysed reaction is (S)-2,3,4,5-tetrahydrodipicolinate + NAD(+) + H2O = (2S,4S)-4-hydroxy-2,3,4,5-tetrahydrodipicolinate + NADH + H(+). The enzyme catalyses (S)-2,3,4,5-tetrahydrodipicolinate + NADP(+) + H2O = (2S,4S)-4-hydroxy-2,3,4,5-tetrahydrodipicolinate + NADPH + H(+). Its pathway is amino-acid biosynthesis; L-lysine biosynthesis via DAP pathway; (S)-tetrahydrodipicolinate from L-aspartate: step 4/4. Catalyzes the conversion of 4-hydroxy-tetrahydrodipicolinate (HTPA) to tetrahydrodipicolinate. The chain is 4-hydroxy-tetrahydrodipicolinate reductase from Salmonella agona (strain SL483).